We begin with the raw amino-acid sequence, 417 residues long: Tryptophan synthase beta chain (417 aa).

Lys110 is modified (N6-(pyridoxal phosphate)lysine).

This sequence belongs to the TrpB family. Tetramer of two alpha and two beta chains. The cofactor is pyridoxal 5'-phosphate.

The catalysed reaction is (1S,2R)-1-C-(indol-3-yl)glycerol 3-phosphate + L-serine = D-glyceraldehyde 3-phosphate + L-tryptophan + H2O. It participates in amino-acid biosynthesis; L-tryptophan biosynthesis; L-tryptophan from chorismate: step 5/5. Its function is as follows. The beta subunit is responsible for the synthesis of L-tryptophan from indole and L-serine. In Prochlorococcus marinus (strain NATL1A), this protein is Tryptophan synthase beta chain.